The chain runs to 35 residues: Z-limacoditoxin(1)-Dv1 (35 aa).

The N-terminal stretch at 1-22 is a signal peptide; that stretch reads MKKTFLPIFLVILLASYALANP. Gln23 is modified (pyrrolidone carboxylic acid). Pro32 is modified (proline amide).

This sequence belongs to the limacoditoxin-1 (ACP-like) family. In terms of tissue distribution, expressed by the venom secretory cell of the spine. The spine is a cuticular structure containing a single large nucleated venom-secreting cell at its base. It is an independent unit capable of producing, storing and injecting venom. On the back of D.vulnerans caterpillars, spines are grouped together by 50 to 100 to form scoli, of which there are eight in D.vulnerans.

Its subcellular location is the secreted. In terms of biological role, potently activates insect G protein-coupled receptor. It activates the ACP receptor (ACPR) from the mosquito A.aegypti (EC(50)=0.55 nM) with a potency comparable to that of the endogenous ligand. Has no activity on receptors of the closely related neuropeptides adipokinetic hormone and corazonin. In vivo, does not reveal any observable effects when injected into crickets (A.domesticus). Does not induce increase in intracellular calcium in mouse DRG neurons, suggesting that it does not induce pain. The chain is Z-limacoditoxin(1)-Dv1 from Doratifera vulnerans (Mottled cup moth).